The sequence spans 63 residues: uncharacterized protein (63 aa).

This is an uncharacterized protein from Haemophilus influenzae (strain ATCC 51907 / DSM 11121 / KW20 / Rd).